A 313-amino-acid polypeptide reads, in one-letter code: Acetaldehyde dehydrogenase 2 (313 aa).

S12–I15 contributes to the NAD(+) binding site. C132 (acyl-thioester intermediate) is an active-site residue. Residues S163–N171 and N287 each bind NAD(+).

It belongs to the acetaldehyde dehydrogenase family.

The enzyme catalyses acetaldehyde + NAD(+) + CoA = acetyl-CoA + NADH + H(+). The chain is Acetaldehyde dehydrogenase 2 (amnH) from Paraburkholderia xenovorans (strain LB400).